We begin with the raw amino-acid sequence, 471 residues long: Trigger factor (471 aa).

The 96-residue stretch at 169 to 264 folds into the PPIase FKBP-type domain; that stretch reads GDVAVVDFKG…LKEIKEKELP (96 aa).

This sequence belongs to the FKBP-type PPIase family. Tig subfamily.

The protein localises to the cytoplasm. It catalyses the reaction [protein]-peptidylproline (omega=180) = [protein]-peptidylproline (omega=0). Its function is as follows. Involved in protein export. Acts as a chaperone by maintaining the newly synthesized protein in an open conformation. Functions as a peptidyl-prolyl cis-trans isomerase. This chain is Trigger factor, found in Nostoc sp. (strain PCC 7120 / SAG 25.82 / UTEX 2576).